Here is a 105-residue protein sequence, read N- to C-terminus: Transmembrane protein 273 (105 aa).

The N-terminal stretch at 1 to 19 (MNLGVSMLRILFLLDVGGA) is a signal peptide. The Extracellular segment spans residues 20–38 (QVLATGKTPGAEIDFKYAL). Residues 39–59 (IGTAVGVAISAGFLALKICMI) traverse the membrane as a helical segment. Over 60–105 (RRHLFDDDSSDLKSTPGGLSDTIPLKKRAPRRNHNFSKRDAQVIEL) the chain is Cytoplasmic.

It is found in the membrane. This chain is Transmembrane protein 273, found in Homo sapiens (Human).